The chain runs to 188 residues: Large ribosomal subunit protein eL18z (188 aa).

It belongs to the eukaryotic ribosomal protein eL18 family.

This is Large ribosomal subunit protein eL18z (RPL18A) from Arabidopsis thaliana (Mouse-ear cress).